The chain runs to 62 residues: Ferredoxin-1 (62 aa).

4Fe-4S ferredoxin-type domains are found at residues 2-28 and 29-62; these read ALYI…SAGS and EIYV…IVQG. Residues cysteine 9, cysteine 12, cysteine 15, cysteine 19, cysteine 38, cysteine 41, cysteine 50, and cysteine 54 each contribute to the [4Fe-4S] cluster site.

The cofactor is [4Fe-4S] cluster.

Functionally, ferredoxins are iron-sulfur proteins that transfer electrons in a wide variety of metabolic reactions. The protein is Ferredoxin-1 of Chlorobaculum tepidum (strain ATCC 49652 / DSM 12025 / NBRC 103806 / TLS) (Chlorobium tepidum).